Consider the following 461-residue polypeptide: Ufm1-specific protease 2 (461 aa).

Catalysis depends on residues cysteine 294, aspartate 418, and histidine 420.

It belongs to the peptidase C78 family. In terms of tissue distribution, expressed at high level in brain, kidney, stomach, skeletal muscle, liver, pancreas, spleen and testis.

The protein localises to the endoplasmic reticulum. Its subcellular location is the cytoplasm. The protein resides in the nucleus. In terms of biological role, thiol-dependent isopeptidase that specifically cleaves UFM1, a ubiquitin-like modifier protein, from conjugated proteins, such as CD274/PD-L1, CYB5R3, DDRGK1, MRE11, RPL26/uL24, TRIP4 and RPL26/uL24. While it is also able to mediate the processing of UFM1 precursors, a prerequisite for conjugation reactions, UFSP2 mainly acts as a protein deUFMylase that mediates deconjugation of UFM1 from target proteins. Mediates deUFMylation of RPL26/uL24, a critical step to release the UFM1 ribosome E3 ligase (UREL) complex during the recycling of 60S ribosome subunits from the endoplasmic reticulum. Catalyzes deUFMylation of TRIP4, regulating intracellular nuclear receptors transactivation and thereby regulate cell proliferation and differentiation. The chain is Ufm1-specific protease 2 from Mus musculus (Mouse).